Reading from the N-terminus, the 424-residue chain is UDP-N-acetylglucosamine 1-carboxyvinyltransferase (424 aa).

Residue 22–23 (KN) coordinates phosphoenolpyruvate. Arg93 is a binding site for UDP-N-acetyl-alpha-D-glucosamine. Cys117 (proton donor) is an active-site residue. The residue at position 117 (Cys117) is a 2-(S-cysteinyl)pyruvic acid O-phosphothioketal. Residues 122–126 (RPVDL), 162–165 (KVSV), Asp307, and Ile329 each bind UDP-N-acetyl-alpha-D-glucosamine.

Belongs to the EPSP synthase family. MurA subfamily.

The protein localises to the cytoplasm. The enzyme catalyses phosphoenolpyruvate + UDP-N-acetyl-alpha-D-glucosamine = UDP-N-acetyl-3-O-(1-carboxyvinyl)-alpha-D-glucosamine + phosphate. The protein operates within cell wall biogenesis; peptidoglycan biosynthesis. Its function is as follows. Cell wall formation. Adds enolpyruvyl to UDP-N-acetylglucosamine. In Haemophilus influenzae (strain 86-028NP), this protein is UDP-N-acetylglucosamine 1-carboxyvinyltransferase.